The following is a 186-amino-acid chain: ADP-ribosylation factor-like protein 8A (186 aa).

The segment at residues 1–19 is an intramembrane region (note=Mediates targeting to membranes); it reads MLALFNKLLDWFRALFWKE. GTP-binding positions include 29–35, 71–75, and 130–133; these read QYSGKTT, DIGGQ, and NKRD.

The protein belongs to the small GTPase superfamily. Arf family.

It is found in the late endosome membrane. Its subcellular location is the lysosome membrane. The protein resides in the cytoplasm. The protein localises to the cytoskeleton. It localises to the spindle. It is found in the cell projection. Its subcellular location is the axon. The protein resides in the synapse. Functionally, plays a role in lysosome motility. In neurons, mediates the anterograde axonal long-range transport of presynaptic lysosome-related vesicles required for presynaptic biogenesis and synaptic function. May play a role in chromosome segregation. This Gallus gallus (Chicken) protein is ADP-ribosylation factor-like protein 8A (ARL8A).